A 224-amino-acid chain; its full sequence is Glutathione S-transferase U8 (224 aa).

A GST N-terminal domain is found at 5 to 85; the sequence is EHVKLLGLWG…YIEDTWKTTH (81 aa). Glutathione contacts are provided by residues 15 to 16, 42 to 43, 56 to 57, and 69 to 70; these read SP, NR, KV, and ES. The GST C-terminal domain maps to 91-213; sequence DPYERAMARF…LPPKEKLVAV (123 aa). Position 152 is a phosphothreonine (T152).

The protein belongs to the GST superfamily. Tau family.

The protein resides in the cytoplasm. It is found in the cytosol. The enzyme catalyses RX + glutathione = an S-substituted glutathione + a halide anion + H(+). Functionally, may be involved in the conjugation of reduced glutathione to a wide number of exogenous and endogenous hydrophobic electrophiles and have a detoxification role against certain herbicides. The sequence is that of Glutathione S-transferase U8 (GSTU8) from Arabidopsis thaliana (Mouse-ear cress).